We begin with the raw amino-acid sequence, 333 residues long: Atrochrysone carboxyl ACP thioesterase MYCFIDRAFT_190111 (333 aa).

Residues histidine 108, histidine 110, aspartate 112, and histidine 113 each contribute to the Zn(2+) site. The active-site Proton donor/acceptor is aspartate 112.

This sequence belongs to the metallo-beta-lactamase superfamily. Zn(2+) is required as a cofactor.

The enzyme catalyses atrochrysone carboxyl-[ACP] + H2O = atrochrysone carboxylate + holo-[ACP] + H(+). It functions in the pathway secondary metabolite biosynthesis. Atrochrysone carboxyl ACP thioesterase; part of the gene cluster that mediates the biosynthesis of an emodin derivative that may be involved in black Sigatoka disease of banana. The pathway begins with the synthesis of atrochrysone thioester by the polyketide synthase PKS8-1. The atrochrysone carboxyl ACP thioesterase MYCFIDRAFT_190111 then breaks the thioester bond and releases the atrochrysone carboxylic acid from PKS8-1. The decarboxylase MYCFIDRAFT_34057 then catalyzes the concerted decarboxylation-elimination required to convert atochrysone carboxylic acid into emodin anthrone, which is further oxidized to emodin by the anthrone oxygenase MYCFIDRAFT_34418. The functions of the other tailoring enzymes as well as the final product of the cluster have still to be identified. In Pseudocercospora fijiensis (strain CIRAD86) (Black leaf streak disease fungus), this protein is Atrochrysone carboxyl ACP thioesterase MYCFIDRAFT_190111.